The sequence spans 341 residues: Peroxisomal membrane protein import receptor PEX19 (341 aa).

A compositionally biased stretch (acidic residues) spans 1–18; sequence MNENEYDNFDDLDDLLDE. Disordered stretches follow at residues 1–26, 39–66, 109–141, 293–312, and 318–341; these read MNENEYDNFDDLDDLLDEDPTKLDEQ, DSENKEKNAESKDSDGVQVANESEEDPE, VPRQQMEQGSSSLKSNSTDKGTLNGSNPGFKNI, LGDSPIRSANSPLKHGNEEE, and LEIDGNDPNLGNLDKELTDGCKQQ. Over residues 39–53 the composition is skewed to basic and acidic residues; that stretch reads DSENKEKNAESKDSD. Residue serine 61 is modified to Phosphoserine. The span at 113-141 shows a compositional bias: polar residues; sequence QMEQGSSSLKSNSTDKGTLNGSNPGFKNI. Serine 303 bears the Phosphoserine mark. A compositionally biased stretch (basic and acidic residues) spans 330–341; that stretch reads LDKELTDGCKQQ. At cysteine 338 the chain carries Cysteine methyl ester. A lipid anchor (S-farnesyl cysteine) is attached at cysteine 338. Residues 339–341 constitute a propeptide, removed in mature form; the sequence is KQQ.

This sequence belongs to the peroxin-19 family. Interacts (farnesylated) with PEX3; farnesylation is required for this interaction. Interacts with PEX2, PEX5, PEX10, PEX11, PEX12, PEX13, PEX14, PEX17, PEX22, PEX25, PEX30 and PEX32; the interaction requires well-defined PEX19-binding sites within the peroxisomal membrane protein targeting signal (mPTS) of the PMPs and is independent on the presence of PEX3. Interacts with VPS1.

Its subcellular location is the cytoplasm. It localises to the peroxisome membrane. It is found in the endoplasmic reticulum membrane. In terms of biological role, required for proper post-translational import and stabilization of peroxisomal membrane proteins (PMPs). Acts as a cytosolic import receptor for PMPs and delivers them to the docking factor PEX3 at the peroxisomal membrane for subsequent insertion into the membrane. Acts as a chaperone in stabilizing or maintaining PMPs in the lipid bilayer. Directs PEX17, a peripheral component of the peroxisomal matrix protein translocation machinery, to peroxisomes. Stabilizes VPS1, a protein required for peroxisomal fission, at the peroxisomal membrane. Also acts in conjunction with PEX3 in the formation of peroxisomes from preperoxisomal compartments at the endoplasmic reticulum during de novo peroxisome synthesis, probably via the import of additional PMPs. The polypeptide is Peroxisomal membrane protein import receptor PEX19 (PEX19) (Saccharomyces cerevisiae (strain YJM789) (Baker's yeast)).